Here is a 193-residue protein sequence, read N- to C-terminus: Penicillin-binding protein activator LpoB (193 aa).

A signal peptide spans 1–16; it reads MKRYLSVALAALVLTG. The N-palmitoyl cysteine moiety is linked to residue Cys-17. A lipid anchor (S-diacylglycerol cysteine) is attached at Cys-17. The tract at residues 24–55 is disordered; it reads EPTTPPVTIEPVTPPVPETPPPVDNVPPPPKM. A compositionally biased stretch (pro residues) spans 35–54; sequence VTPPVPETPPPVDNVPPPPK.

This sequence belongs to the LpoB family. In terms of assembly, interacts with PBP1b.

It localises to the cell outer membrane. In terms of biological role, regulator of peptidoglycan synthesis that is essential for the function of penicillin-binding protein 1B (PBP1b). This is Penicillin-binding protein activator LpoB from Yersinia enterocolitica serotype O:8 / biotype 1B (strain NCTC 13174 / 8081).